The sequence spans 135 residues: UPF0201 protein TON_1346 (135 aa).

This sequence belongs to the UPF0201 family.

This chain is UPF0201 protein TON_1346, found in Thermococcus onnurineus (strain NA1).